A 230-amino-acid polypeptide reads, in one-letter code: Sugar fermentation stimulation protein homolog (230 aa).

The protein belongs to the SfsA family.

The sequence is that of Sugar fermentation stimulation protein homolog from Ruegeria pomeroyi (strain ATCC 700808 / DSM 15171 / DSS-3) (Silicibacter pomeroyi).